The sequence spans 528 residues: Probable feruloyl esterase B-1 (528 aa).

An N-terminal signal peptide occupies residues 1 to 19 (MMWWFLLIGLASAAATASS). Cystine bridges form between Cys-29–Cys-78, Cys-64–Cys-117, Cys-190–Cys-445, Cys-259–Cys-276, Cys-285–Cys-295, and Cys-505–Cys-527. 2 N-linked (GlcNAc...) asparagine glycosylation sites follow: Asn-83 and Asn-101. Ser-191 serves as the catalytic Acyl-ester intermediate. Residues Asp-260, Asp-263, Ala-265, Asp-267, and Ile-269 each coordinate Ca(2+). 3 N-linked (GlcNAc...) asparagine glycosylation sites follow: Asn-286, Asn-354, and Asn-385. Active-site charge relay system residues include Asp-404 and His-444.

This sequence belongs to the tannase family.

It is found in the secreted. The enzyme catalyses feruloyl-polysaccharide + H2O = ferulate + polysaccharide.. In terms of biological role, involved in degradation of plant cell walls. Hydrolyzes the feruloyl-arabinose ester bond in arabinoxylans as well as the feruloyl-galactose and feruloyl-arabinose ester bonds in pectin. This Aspergillus fumigatus (strain CBS 144.89 / FGSC A1163 / CEA10) (Neosartorya fumigata) protein is Probable feruloyl esterase B-1 (faeB-1).